A 251-amino-acid polypeptide reads, in one-letter code: Carbohydrate deacetylase (251 aa).

The Mg(2+) site is built by H59 and H122.

The protein belongs to the YdjC deacetylase family. In terms of assembly, homodimer. The cofactor is Mg(2+).

Its function is as follows. Probably catalyzes the deacetylation of acetylated carbohydrates an important step in the degradation of oligosaccharides. The sequence is that of Carbohydrate deacetylase from Vibrio parahaemolyticus serotype O3:K6 (strain RIMD 2210633).